Here is a 312-residue protein sequence, read N- to C-terminus: uncharacterized protein (312 aa).

Its subcellular location is the mitochondrion. This is an uncharacterized protein from Schizosaccharomyces pombe (strain 972 / ATCC 24843) (Fission yeast).